Here is a 147-residue protein sequence, read N- to C-terminus: DNA-directed RNA polymerase subunit 6 homolog (147 aa).

This sequence belongs to the archaeal RpoK/eukaryotic RPB6 RNA polymerase subunit family. In terms of assembly, part of the viral DNA-directed RNA polymerase that consists of 8 polII-like subunits (RPB1, RPB2, RPB3, RPB5, RPB6, RPB7, RPB9, RPB10), a capping enzyme and a termination factor.

The protein resides in the host cytoplasm. The protein localises to the virion. Component of the DNA-directed RNA polymerase (RNAP) that catalyzes the transcription in the cytoplasm of viral DNA into RNA using the four ribonucleoside triphosphates as substrates. The polypeptide is DNA-directed RNA polymerase subunit 6 homolog (Ornithodoros (relapsing fever ticks)).